A 186-amino-acid chain; its full sequence is NADH-quinone oxidoreductase subunit I (186 aa).

2 4Fe-4S ferredoxin-type domains span residues 70–100 (LTTRADGKVQCVSCNMCATVCPAYCIEIQSA) and 113–142 (DRFEIDYSRCIFCGFCVEACPEDAIRMSKD). [4Fe-4S] cluster is bound by residues cysteine 80, cysteine 83, cysteine 86, cysteine 90, cysteine 122, cysteine 125, cysteine 128, and cysteine 132.

The protein belongs to the complex I 23 kDa subunit family. In terms of assembly, NDH-1 is composed of 14 different subunits. Subunits NuoA, H, J, K, L, M, N constitute the membrane sector of the complex. [4Fe-4S] cluster is required as a cofactor.

The protein resides in the cell inner membrane. The enzyme catalyses a quinone + NADH + 5 H(+)(in) = a quinol + NAD(+) + 4 H(+)(out). Functionally, NDH-1 shuttles electrons from NADH, via FMN and iron-sulfur (Fe-S) centers, to quinones in the respiratory chain. The immediate electron acceptor for the enzyme in this species is believed to be ubiquinone. Couples the redox reaction to proton translocation (for every two electrons transferred, four hydrogen ions are translocated across the cytoplasmic membrane), and thus conserves the redox energy in a proton gradient. The polypeptide is NADH-quinone oxidoreductase subunit I (Pelobacter propionicus (strain DSM 2379 / NBRC 103807 / OttBd1)).